A 550-amino-acid chain; its full sequence is tRNA modification GTPase MnmE (550 aa).

3 residues coordinate (6S)-5-formyl-5,6,7,8-tetrahydrofolate: Arg20, Glu78, and Arg116. Residues Gly212–Ser478 enclose the TrmE-type G domain. Asn222 contributes to the K(+) binding site. GTP-binding positions include Asn222 to Thr227, Thr241 to Thr247, and Asp266 to Gly269. Residue Ser226 participates in Mg(2+) binding. Residues Thr241, Ile243, and Thr246 each contribute to the K(+) site. Thr247 is a binding site for Mg(2+). Lys550 provides a ligand contact to (6S)-5-formyl-5,6,7,8-tetrahydrofolate.

This sequence belongs to the TRAFAC class TrmE-Era-EngA-EngB-Septin-like GTPase superfamily. TrmE GTPase family. As to quaternary structure, homodimer. Heterotetramer of two MnmE and two MnmG subunits. Requires K(+) as cofactor.

It is found in the cytoplasm. Exhibits a very high intrinsic GTPase hydrolysis rate. Involved in the addition of a carboxymethylaminomethyl (cmnm) group at the wobble position (U34) of certain tRNAs, forming tRNA-cmnm(5)s(2)U34. This chain is tRNA modification GTPase MnmE, found in Neorickettsia sennetsu (strain ATCC VR-367 / Miyayama) (Ehrlichia sennetsu).